The chain runs to 257 residues: Urease accessory protein UreD (257 aa).

The protein belongs to the UreD family. In terms of assembly, ureD, UreF and UreG form a complex that acts as a GTP-hydrolysis-dependent molecular chaperone, activating the urease apoprotein by helping to assemble the nickel containing metallocenter of UreC. The UreE protein probably delivers the nickel.

It localises to the cytoplasm. In terms of biological role, required for maturation of urease via the functional incorporation of the urease nickel metallocenter. The polypeptide is Urease accessory protein UreD (Sporosarcina pasteurii (Bacillus pasteurii)).